Here is a 312-residue protein sequence, read N- to C-terminus: tRNA dimethylallyltransferase (312 aa).

An ATP-binding site is contributed by 13–20 (GPTAAGKT). A substrate-binding site is contributed by 15–20 (TAAGKT). Interaction with substrate tRNA stretches follow at residues 38–41 (DSAM), 162–166 (QRLLR), and 244–249 (RCVGYR).

It belongs to the IPP transferase family. As to quaternary structure, monomer. Mg(2+) is required as a cofactor.

The enzyme catalyses adenosine(37) in tRNA + dimethylallyl diphosphate = N(6)-dimethylallyladenosine(37) in tRNA + diphosphate. In terms of biological role, catalyzes the transfer of a dimethylallyl group onto the adenine at position 37 in tRNAs that read codons beginning with uridine, leading to the formation of N6-(dimethylallyl)adenosine (i(6)A). The polypeptide is tRNA dimethylallyltransferase (Chromohalobacter salexigens (strain ATCC BAA-138 / DSM 3043 / CIP 106854 / NCIMB 13768 / 1H11)).